Consider the following 142-residue polypeptide: Large ribosomal subunit protein uL13 (142 aa).

This sequence belongs to the universal ribosomal protein uL13 family. In terms of assembly, part of the 50S ribosomal subunit.

In terms of biological role, this protein is one of the early assembly proteins of the 50S ribosomal subunit, although it is not seen to bind rRNA by itself. It is important during the early stages of 50S assembly. This is Large ribosomal subunit protein uL13 from Geobacter sp. (strain M21).